Here is a 195-residue protein sequence, read N- to C-terminus: Probable septum site-determining protein MinC (195 aa).

The protein belongs to the MinC family. In terms of assembly, interacts with MinD and FtsZ.

Cell division inhibitor that blocks the formation of polar Z ring septums. Rapidly oscillates between the poles of the cell to destabilize FtsZ filaments that have formed before they mature into polar Z rings. Prevents FtsZ polymerization. This Helicobacter pylori (strain G27) protein is Probable septum site-determining protein MinC.